The sequence spans 468 residues: ATP-dependent protease ATPase subunit HslU (468 aa).

Residues Val22 and 64 to 69 each bind ATP; that span reads GVGKTE. A disordered region spans residues 166–187; it reads FGNNDEEDEEPPTEDIKTKRSE. Acidic residues predominate over residues 169–178; that stretch reads NDEEDEEPPT. ATP contacts are provided by Asp281, Glu346, and Arg418.

The protein belongs to the ClpX chaperone family. HslU subfamily. As to quaternary structure, a double ring-shaped homohexamer of HslV is capped on each side by a ring-shaped HslU homohexamer. The assembly of the HslU/HslV complex is dependent on binding of ATP.

The protein localises to the cytoplasm. In terms of biological role, ATPase subunit of a proteasome-like degradation complex; this subunit has chaperone activity. The binding of ATP and its subsequent hydrolysis by HslU are essential for unfolding of protein substrates subsequently hydrolyzed by HslV. HslU recognizes the N-terminal part of its protein substrates and unfolds these before they are guided to HslV for hydrolysis. This is ATP-dependent protease ATPase subunit HslU from Staphylococcus carnosus (strain TM300).